A 466-amino-acid polypeptide reads, in one-letter code: MFSTEPRSDTAPGSPSCSETKRRKVRRGTHSCWECKRRKVKCSYSNPSDPRCIGCRRRGTKCLSQQDVDEGASVVSAAVDEDRRIGDRMVRVEALIEQLANQVVNRESEKVVGTNDSESDLATSCSPQDTQTLKHLLPQKVNSPSTCIEYAPVSAALHAALPPHEDINLIIKAGLDVSLHRLMTTSLATLSRCIDGFRAGLAEIPSVDTHPTLLARYLLILATCLQAAHPELHAKEIRCLSEPPRLAMRRLVNAATDLVTSKDELLSSVEGLECVMLESLYLANDGNLRRAWLVCRRAMAVAQLLGLHRVDSQQLPCLTFLSQSVDPRFLWFRIVCTDRQLCLMLGLPQGTPDVSMATESALANDSASGRFERKQCVIASRILERNEASGDFTNDDLATVLKLDEELQQAANEMPSSWWLVPNLASSLHDQNKTIWEMLRLIEQMLYFNLLNLLHLPCMLRARQPA.

The span at 1–18 (MFSTEPRSDTAPGSPSCS) shows a compositional bias: polar residues. A disordered region spans residues 1 to 22 (MFSTEPRSDTAPGSPSCSETKR). Residues 32-62 (CWECKRRKVKCSYSNPSDPRCIGCRRRGTKC) constitute a DNA-binding region (zn(2)-C6 fungal-type).

It localises to the nucleus. Its function is as follows. Transcription factor; part of the gene cluster that mediates the biosynthesis of eupenifeldin, a bistropolone meroterpenoid that acts as an antitumor agent. This is Transcription factor eupR from Phoma sp.